Reading from the N-terminus, the 629-residue chain is tRNA uridine 5-carboxymethylaminomethyl modification enzyme MnmG (629 aa).

FAD-binding positions include 13 to 18, valine 125, and serine 180; that span reads GGGHAG. Position 273–287 (273–287) interacts with NAD(+); that stretch reads GPRYCPSIEDKVMRF. Glutamine 370 contacts FAD.

Belongs to the MnmG family. In terms of assembly, homodimer. Heterotetramer of two MnmE and two MnmG subunits. The cofactor is FAD.

It localises to the cytoplasm. Its function is as follows. NAD-binding protein involved in the addition of a carboxymethylaminomethyl (cmnm) group at the wobble position (U34) of certain tRNAs, forming tRNA-cmnm(5)s(2)U34. This Escherichia coli O157:H7 protein is tRNA uridine 5-carboxymethylaminomethyl modification enzyme MnmG.